We begin with the raw amino-acid sequence, 519 residues long: Histidine--tRNA ligase (519 aa).

The protein belongs to the class-II aminoacyl-tRNA synthetase family. In terms of assembly, homodimer.

Its subcellular location is the cytoplasm. It catalyses the reaction tRNA(His) + L-histidine + ATP = L-histidyl-tRNA(His) + AMP + diphosphate + H(+). The chain is Histidine--tRNA ligase from Roseobacter denitrificans (strain ATCC 33942 / OCh 114) (Erythrobacter sp. (strain OCh 114)).